The primary structure comprises 391 residues: Tyrosinase-like protein phomQ2 (391 aa).

The tract at residues 1-21 (MDNVGCEASSSRDPKGKKAVG) is disordered. Residues 61-81 (IRGFICATIIFVVCLGALSYI) form a helical membrane-spanning segment. 2 N-linked (GlcNAc...) asparagine glycosylation sites follow: Asn97 and Asn141. Cu cation-binding residues include His160 and His169. N-linked (GlcNAc...) asparagine glycans are attached at residues Asn204, Asn246, and Asn261. Cu cation is bound by residues His298 and His324. Asn353 carries N-linked (GlcNAc...) asparagine glycosylation.

Belongs to the tyrosinase family. Requires Cu(2+) as cofactor.

The protein resides in the membrane. It functions in the pathway mycotoxin biosynthesis. In terms of biological role, tyrosinase-like protein; part of the gene cluster that mediates the biosynthesis of the phomopsins, a group of hexapeptide mycotoxins which infects lupins and causes lupinosis disease in livestock. Within the pathway, phomQ2 is involved in the generation of the common 13-membered macrocycle, possibly by catalyzing the hydroxylation of Tyr. The pathway starts with the processing of the precursor phomA by several endopeptidases including kexin proteases as well as the cluster-specific S41 family peptidase phomP1 and the oligopeptidase phomG to produce 10 identical copies of the hexapeptide Tyr-Val-Ile-Pro-Ile-Asp. After being excised from the precursor peptide, the core peptides are cyclized and modified post-translationally by enzymes encoded within the gene cluster. The timing and order of proteolysis of the phomA precursor and PTMs are still unknown. Two tyrosinase-like enzymes, phomQ1 and phomQ2, catalyze the chlorination and hydroxylation of Tyr, respectively. PhomYb, is proposed to be involved in the construction of the macrocyclic structure. The other 4 ustYa family proteins may be involved in PTMs that generate the unique structure of phomopsin A. PhomYa is required for the hydroxylation of C-beta of Tyr. PhomYc, phomYd, and phomYe are responsible for the biosynthesis of 2,3-dehydroisoleucine (dIle), 2,3-dehydroaspartic acid (dAsp), and 3,4-dehydroproline (dPro), respectively. While dIle formation by phomYc is indispensable for the installation of dAsp by phomYd, the order of the other PTMs have not been elucidated yet. Most of the biosynthetic enzymes likely have broad substrate specificity, and thus, there might be a metabolic grid from a precursor to phomopsin A. The enzyme(s) responsible for the biosynthesis of 3,4-dehydrovaline (dVal) have also not been identified yet. Finally, phomM acts as an S-adenosylmethionine-dependent alpha-N-methyltransferase that catalyzes two successive N-methylation reactions, converting N-desmethyl-phomopsin A to phomopsin A and phomopsin A further to an N,N-dimethylated congener called phomopsin E. In Diaporthe leptostromiformis (Lupinosis disease fungus), this protein is Tyrosinase-like protein phomQ2.